A 579-amino-acid chain; its full sequence is UPF0324 membrane protein DVU_2133 (579 aa).

Transmembrane regions (helical) follow at residues 26 to 45 (YWAI…LFLA), 193 to 215 (PFNI…AVGM), 225 to 243 (FLVG…LMMG), 250 to 272 (YWGI…TVGT), 305 to 327 (IGIP…TFIF), 369 to 391 (LTLA…PAFI), 401 to 423 (GGAW…AFLG), 436 to 456 (IQNV…CARV), 476 to 495 (FVLG…GSLG), 515 to 534 (LRNW…TNFR), and 549 to 571 (YVAG…FYIV).

It belongs to the UPF0324 family.

The protein resides in the cell membrane. The polypeptide is UPF0324 membrane protein DVU_2133 (Nitratidesulfovibrio vulgaris (strain ATCC 29579 / DSM 644 / CCUG 34227 / NCIMB 8303 / VKM B-1760 / Hildenborough) (Desulfovibrio vulgaris)).